A 1073-amino-acid polypeptide reads, in one-letter code: TSC22 domain family protein 1 (1073 aa).

Residues 1 to 98 (MHQPPESTAA…SQAQLQAQPL (98 aa)) are required for interaction with TGFBR1 and promotion of TGF-beta signaling. Disordered stretches follow at residues 22–110 (MAHP…KKSG), 125–205 (ISSN…PHLP), 220–288 (LHHH…SPAS), 458–486 (VTSE…SVGS), 607–628 (YSQA…QQLQ), and 742–766 (VQQP…QVVP). The segment covering 36–45 (GSASALNAAG) has biased composition (low complexity). Over residues 58 to 70 (FPPPSLLQPPPPA) the composition is skewed to pro residues. Residues 84–100 (SLNLLSQAQLQAQPLAP) show a composition bias toward low complexity. Over residues 133–142 (EDTESYDDLD) the composition is skewed to acidic residues. Over residues 220-240 (LHHHHQIHHGHHLQHGHHHPS) the composition is skewed to basic residues. The span at 257 to 271 (PVSRKLSTTGSSDSI) shows a compositional bias: polar residues. Phosphoserine is present on Ser263. Composition is skewed to low complexity over residues 272–288 (TPVA…SPAS) and 465–483 (TSGS…YTES). Residues 614–625 (VQTPLPGAPPPQ) show a composition bias toward pro residues. Positions 742–764 (VQQPSTQVPPSVIQQGAPPSSQV) are enriched in polar residues. The interval 1006–1027 (LKEQIKELIEKNSQLEQENNLL) is leucine-zipper. The interval 1037–1073 (AQFQAQLQTGSPPATTQPQGTTQPPAQPASQGSGPTA) is disordered. Residues 1044–1073 (QTGSPPATTQPQGTTQPPAQPASQGSGPTA) are compositionally biased toward low complexity.

It belongs to the TSC-22/Dip/Bun family. In terms of assembly, forms homodimers. Forms heterodimers. Component of a complex composed of TSC22D1 (via N-terminus), TGFBR1 and TGFBR2; the interaction between TSC22D1 and TGFBR1 is inhibited by SMAD7 and promoted by TGFB1. Interacts with SMAD7; the interaction requires TGF-beta and the interaction is inhibited by TGFBR1. Interacts with TPT1/fortilin; interaction results in the destabilization of TSC22D1 protein and prevents TSC22D1-mediated apoptosis. Interacts with SMAD4 (via N-terminus). Interacts with ACVRL1/ALK1, ACVR1/ALK2, BMPR1A/ALK3, ACVR1B/ALK4, BMPR1B/ALK6, ACVR2A/ACTRII, and BMPR2. Interacts with SMAD6. Interacts with TFE3; the interaction is enhanced in the presence of TGF-beta. As to quaternary structure, forms a heterodimer with TSC22D4/THG1. Forms a heterodimer with TSC22D4/THG1. Interacts with histone H1-2. Interacts with GNL3. In terms of assembly, interacts with histone H1-2. Ubiquitously expressed in adult tissues. Expressed in the postmitotic epithelial compartment at the top of intestinal mucosal villi.

It is found in the cytoplasm. It localises to the nucleus. Its subcellular location is the cell membrane. The protein localises to the mitochondrion. Its function is as follows. Transcriptional repressor. Acts on the C-type natriuretic peptide (CNP) promoter. Acts to promote CASP3-mediated apoptosis. Positively regulates TGF-beta signaling by interacting with SMAD7 which inhibits binding of SMAD7 to TGFBR1, preventing recruitment of SMURF ubiquitin ligases to TGFBR1 and inhibiting SMURF-mediated ubiquitination and degradation of TGFBR1. Contributes to enhancement of TGF-beta signaling by binding to and modulating the transcription activator activity of SMAD4. Promotes TGF-beta-induced transcription of COL1A2; via its interaction with TFE3 at E-boxes in the gene proximal promoter. Plays a role in the repression of hematopoietic precursor cell growth. Promotes IL2 deprivation-induced apoptosis in T-lymphocytes, via repression of TSC22D3/GILZ transcription and activation of the caspase cascade. In terms of biological role, may act to negatively regulate TGFB3 signaling and thereby inhibit cell death in mammary gland cells. Functionally, positively regulates cell death in response to TGFB3 during mammary gland involution. The sequence is that of TSC22 domain family protein 1 from Homo sapiens (Human).